The sequence spans 410 residues: ACT domain-containing protein ACR10 (410 aa).

3 consecutive ACT domains span residues 22-105, 114-197, and 245-324; these read VITI…SESQ, LLKL…LVGP, and LIHI…VVMM.

Functionally, may bind amino acids. The polypeptide is ACT domain-containing protein ACR10 (Arabidopsis thaliana (Mouse-ear cress)).